Consider the following 465-residue polypeptide: MAP kinase-interacting serine/threonine-protein kinase 2 (465 aa).

The interval 23–72 is disordered; sequence ELAFSLDQPDHGDSDFGLQCSARPDMPASQPIDIPDAKKRGKKKKRGRAT. The Nuclear localization signal motif lies at 60-66; it reads KKRGKKK. Position 74 is a phosphoserine (S74). A Protein kinase domain is found at 84-388; that stretch reads QLQEDVLGEG…TPMVLQRNSC (305 aa). ATP is bound by residues 90–98 and K113; that span reads LGEGAHARV. 160–162 is a binding site for staurosporine; sequence EKM. The Proton acceptor role is filled by D205. E209 provides a ligand contact to staurosporine. T244 and T249 each carry phosphothreonine. Positions 299, 311, and 314 each coordinate Zn(2+). T379 carries the post-translational modification Phosphothreonine. Residues S437 and S440 each carry the phosphoserine modification. The MAP kinase binding motif lies at 444 to 448; sequence LAQRR. Position 452 is a phosphoserine (S452).

The protein belongs to the protein kinase superfamily. CAMK Ser/Thr protein kinase family. In terms of assembly, monomer. Interacts with the C-terminal regions of EIF4G1 and EIF4G2; this interaction is promoted when MAPK pathways are repressed but repressed upon ERK proteins activation. Also binds to dephosphorylated MAPK3/ERK1 and MAPK1/ERK2. Isoform 1 interaction with phosphorylated MAPK3/ERK1 and MAPK1/ERK2 protects it from dephosphorylation and inactivation. Isoform 2 interacts with ESR2 and EIF4E in the nucleus. It depends on Mg(2+) as a cofactor. The cofactor is Zn(2+). Post-translationally, dual phosphorylation of Thr-244 and Thr-249 activates the kinase. Phosphorylation of Thr-379 activates the kinase. Phosphorylated upon arsenic trioxide As(2)O(3) treatment. Phosphorylated by MAPK1/ERK2, MAPK11 and MAPK14. Dephosphorylated by PP2A. As to expression, ubiquitously expressed in all tissues examined. Isoform 2 is expressed at higher levels in the ovary than is isoform 1.

It is found in the nucleus. It localises to the PML body. Its subcellular location is the cytoplasm. It carries out the reaction L-seryl-[protein] + ATP = O-phospho-L-seryl-[protein] + ADP + H(+). It catalyses the reaction L-threonyl-[protein] + ATP = O-phospho-L-threonyl-[protein] + ADP + H(+). Its activity is regulated as follows. Inhibited by CGP57380 and staurosporine. Activated by phosphorylation in a negative-feedback regulatory manner in response to chemotherapy (e.g. cytarabine) and thus impairs the generation of antileukemic responses. Functionally, serine/threonine-protein kinase that phosphorylates SFPQ/PSF, HNRNPA1 and EIF4E. May play a role in the response to environmental stress and cytokines. Appears to regulate translation by phosphorylating EIF4E, thus increasing the affinity of this protein for the 7-methylguanosine-containing mRNA cap. Required for mediating PP2A-inhibition-induced EIF4E phosphorylation. Triggers EIF4E shuttling from cytoplasm to nucleus. Isoform 1 displays a high basal kinase activity, but isoform 2 exhibits a very low kinase activity. Acts as a mediator of the suppressive effects of IFNgamma on hematopoiesis. Negative regulator for signals that control generation of arsenic trioxide As(2)O(3)-dependent apoptosis and anti-leukemic responses. Involved in anti-apoptotic signaling in response to serum withdrawal. This chain is MAP kinase-interacting serine/threonine-protein kinase 2 (MKNK2), found in Homo sapiens (Human).